The chain runs to 788 residues: Integrin beta-6 (788 aa).

Positions 1 to 21 are cleaved as a signal peptide; sequence MGIELLCFFFLFLGRDDHVRG. The PSI domain maps to 22–71; sequence GCAMEGAETCGDCLLIGPQCAWCSQENFTHPSGVSERCDTPANLLAKGCQ. Over 22 to 709 the chain is Extracellular; sequence GCAMEGAETC…KDCPKPPNIP (688 aa). Cystine bridges form between C23–C41, C31–C454, C34–C59, C44–C70, C197–C204, C252–C293, C394–C406, C426–C452, C456–C476, C467–C479, C481–C490, C492–C519, C502–C517, C511–C522, C524–C537, C539–C560, C544–C558, C552–C563, and C565–C574. N48 and N97 each carry an N-linked (GlcNAc...) asparagine glycan. The VWFA domain maps to 131-371; it reads YPVDLYYLMD…QLIISAYEEL (241 aa). The Mg(2+) site is built by D140, S142, and S144. Ca(2+) is bound by residues S144, D147, D148, and E179. The Ca(2+) site is built by N235, D237, P239, and E240. E240 is a binding site for Mg(2+). The N-linked (GlcNAc...) asparagine glycan is linked to N260. Positions 271 and 355 each coordinate Ca(2+). Residues N387, N396, and N418 are each glycosylated (N-linked (GlcNAc...) asparagine). I-EGF domains lie at 456 to 491, 492 to 538, 539 to 575, and 576 to 615; these read CQKE…PHCE, CGED…PYCQ, CDNF…EYCN, and CTTS…PTCE. N463 and N471 each carry an N-linked (GlcNAc...) asparagine glycan. N-linked (GlcNAc...) asparagine glycosylation is present at N541. The N-linked (GlcNAc...) asparagine glycan is linked to N575. 9 disulfide bridges follow: C576–C599, C583–C597, C591–C602, C604–C614, C617–C620, C624–C670, C630–C649, C633–C645, and C678–C702. A glycan (N-linked (GlcNAc...) asparagine) is linked at N696. The helical transmembrane segment at 710-730 threads the bilayer; it reads MIMLGVSLAILLIGVVLLCIW. An interaction with HAX1 region spans residues 731–758; it reads KLLVSFHDRKEVAKFEAERSKAKWQTGT. At 731-788 the chain is on the cytoplasmic side; sequence KLLVSFHDRKEVAKFEAERSKAKWQTGTNPLYRGSTSTFKNVTYKHRDKLKTDLSTDG.

This sequence belongs to the integrin beta chain family. As to quaternary structure, heterodimer of an alpha and a beta subunit. Interacts with FLNB. Interacts with HAX1. ITGAV:ITGB6 interacts with FBN1. ITGAV:ITGB6 interacts with TGFB1.

It is found in the cell membrane. The protein resides in the cell junction. It localises to the focal adhesion. In terms of biological role, integrin alpha-V:beta-6 (ITGAV:ITGB6) is a receptor for fibronectin and cytotactin. It recognizes the sequence R-G-D in its ligands. ITGAV:ITGB6 acts as a receptor for fibrillin-1 (FBN1) and mediates R-G-D-dependent cell adhesion to FBN1. Integrin alpha-V:beta-6 (ITGAV:ITGB6) mediates R-G-D-dependent release of transforming growth factor beta-1 (TGF-beta-1) from regulatory Latency-associated peptide (LAP), thereby playing a key role in TGF-beta-1 activation. This Cavia porcellus (Guinea pig) protein is Integrin beta-6 (ITGB6).